Here is a 581-residue protein sequence, read N- to C-terminus: Neither inactivation nor afterpotential protein G (581 aa).

A signal peptide spans 1-26 (MGMKFQKILVLAGIVIGFLSIIVVLA). 48–77 (DYVIVGGGTGGSTLTSLLAKNSNGSVLLIE) is a binding site for FAD. N-linked (GlcNAc...) asparagine glycans are attached at residues Asn70, Asn156, Asn404, and Asn464. His516 functions as the Proton acceptor in the catalytic mechanism.

The protein belongs to the GMC oxidoreductase family. FAD is required as a cofactor.

The protein resides in the secreted. Oxidoreductase involved in biosynthesis of 3-hydroxyretinal, a chromophore for rhodopsin Rh1. Not responsible for the initial hydroxylation of the retinal ring but rather acts in a subsequent step in chromophore production. May catalyze the conversion of (3R)-3-hydroxyretinol to the 3S enantiomer. This chain is Neither inactivation nor afterpotential protein G (ninaG), found in Drosophila melanogaster (Fruit fly).